Consider the following 399-residue polypeptide: MAEAMDLGKDPNGPTHSSTLFVRDDGSSMSFYVRPSPAKRRLSTLILHGGGTVCRVQEPGAVLLAQPGEALAEASGDFISTQYILDCVERNERLELEAYRLGPASAADTGSEAKPGALAEGAAEPEPQRHAGRIAFTDADDVAILTYVKENARSPSSVTGNALWKAMEKSSLTQHSWQSLKDRYLKHLRGQEHKYLLGDAPVSPSSQKLKRKAEEDPEAADSGEPQNKRTPDLPEEEYVKEEIQENEEAVKKMLVEATREFEEVVVDESPPDFEIHITMCDDDPPTPEEDSETQPDEEEEEEEEKVSQPEVGAAIKIIRQLMEKFNLDLSTVTQAFLKNSGELEATSAFLASGQRADGYPIWSRQDDIDLQKDDEDTREALVKKFGAQNVARRIEFRKK.

An N-acetylalanine modification is found at A2. A phosphoserine mark is found at S36 and S43. The region spanning 78-101 (FISTQYILDCVERNERLELEAYRL) is the BRCT domain. The interval 104–132 (ASAADTGSEAKPGALAEGAAEPEPQRHAG) is disordered. Residues 112-125 (EAKPGALAEGAAEP) are compositionally biased toward low complexity. Residue K114 forms a Glycyl lysine isopeptide (Lys-Gly) (interchain with G-Cter in SUMO2) linkage. One can recognise a Myb-like domain in the interval 128-188 (QRHAGRIAFT…SLKDRYLKHL (61 aa)). Phosphoserine occurs at positions 154 and 156. K194 participates in a covalent cross-link: Glycyl lysine isopeptide (Lys-Gly) (interchain with G-Cter in SUMO2). Disordered regions lie at residues 196–244 (LLGD…EEIQ) and 264–311 (VVVD…QPEV). Residues S203 and S206 each carry the phosphoserine modification. Residues K208, K212, and K240 each participate in a glycyl lysine isopeptide (Lys-Gly) (interchain with G-Cter in SUMO2) cross-link. Residues 280–304 (CDDDPPTPEEDSETQPDEEEEEEEE) show a composition bias toward acidic residues. A Glycyl lysine isopeptide (Lys-Gly) (interchain with G-Cter in SUMO2) cross-link involves residue K372. The short motif at 383 to 399 (KKFGAQNVARRIEFRKK) is the Nuclear localization signal element.

Belongs to the RAP1 family. As to quaternary structure, associates with the I-kappa-B-kinase (IKK) core complex, composed of CHUK, IKBKB and IKBKG. Homodimer. Component of the shelterin complex (telosome) composed of TERF1, TERF2, TINF2, TERF2IP ACD and POT1. Interacts with TERF2; the interaction is direct. Does not interact with TERF1. Interacts with SLX4/BTBD12. As to expression, ubiquitous. Highly expressed.

Its subcellular location is the nucleus. It is found in the cytoplasm. The protein resides in the chromosome. The protein localises to the telomere. Its function is as follows. Acts both as a regulator of telomere function and as a transcription regulator. Involved in the regulation of telomere length and protection as a component of the shelterin complex (telosome). In contrast to other components of the shelterin complex, it is dispensible for telomere capping and does not participate in the protection of telomeres against non-homologous end-joining (NHEJ)-mediated repair. Instead, it is required to negatively regulate telomere recombination and is essential for repressing homology-directed repair (HDR), which can affect telomere length. Does not bind DNA directly: recruited to telomeric double-stranded 5'-TTAGGG-3' repeats via its interaction with TERF2. Independently of its function in telomeres, also acts as a transcription regulator: recruited to extratelomeric 5'-TTAGGG-3' sites via its association with TERF2 or other factors, and regulates gene expression. When cytoplasmic, associates with the I-kappa-B-kinase (IKK) complex and acts as a regulator of the NF-kappa-B signaling by promoting IKK-mediated phosphorylation of RELA/p65, leading to activate expression of NF-kappa-B target genes. The sequence is that of Telomeric repeat-binding factor 2-interacting protein 1 (TERF2IP) from Homo sapiens (Human).